Reading from the N-terminus, the 366-residue chain is GTPase Obg (366 aa).

Residues 1–162 (MRFVDEATIN…RRLRLELKIL (162 aa)) form the Obg domain. One can recognise an OBG-type G domain in the interval 163–335 (ADAGLLGLPN…VVDAMWRLRD (173 aa)). GTP contacts are provided by residues 169-176 (GLPNAGKS), 194-198 (FTTLT), 218-221 (DIPG), 288-291 (NKID), and 316-318 (SAM). Mg(2+) contacts are provided by serine 176 and threonine 196.

The protein belongs to the TRAFAC class OBG-HflX-like GTPase superfamily. OBG GTPase family. As to quaternary structure, monomer. The cofactor is Mg(2+).

It localises to the cytoplasm. Functionally, an essential GTPase which binds GTP, GDP and possibly (p)ppGpp with moderate affinity, with high nucleotide exchange rates and a fairly low GTP hydrolysis rate. Plays a role in control of the cell cycle, stress response, ribosome biogenesis and in those bacteria that undergo differentiation, in morphogenesis control. This Nitratidesulfovibrio vulgaris (strain ATCC 29579 / DSM 644 / CCUG 34227 / NCIMB 8303 / VKM B-1760 / Hildenborough) (Desulfovibrio vulgaris) protein is GTPase Obg.